Here is a 453-residue protein sequence, read N- to C-terminus: Cysteine desulfurase, mitochondrial (453 aa).

The N-terminal 34 residues, 1–34 (MASKVISATIRRTLTKPHGTFSRCRYLSTAAAAT), are a transit peptide targeting the mitochondrion. Pyridoxal 5'-phosphate-binding positions include 123-124 (AT), Asn-203, Gln-231, and 251-253 (SAH). Lys-254 carries the post-translational modification N6-(pyridoxal phosphate)lysine. Thr-291 is a binding site for pyridoxal 5'-phosphate. Residue Cys-377 is the Cysteine persulfide intermediate of the active site. [2Fe-2S] cluster is bound at residue Cys-377.

It belongs to the class-V pyridoxal-phosphate-dependent aminotransferase family. NifS/IscS subfamily. Interacts with FH. Interacts with SUFE1. Pyridoxal 5'-phosphate is required as a cofactor.

The protein resides in the mitochondrion. It carries out the reaction (sulfur carrier)-H + L-cysteine = (sulfur carrier)-SH + L-alanine. With respect to regulation, threefold increase in the catalytic activity in the presence of FH (frataxin). 30-fold increase in the catalytic activity in the presence of SUFE1. In terms of biological role, catalyzes the removal of elemental sulfur from cysteine to produce alanine. Supplies the inorganic sulfur for iron-sulfur (Fe-S) clusters. This chain is Cysteine desulfurase, mitochondrial, found in Arabidopsis thaliana (Mouse-ear cress).